Consider the following 228-residue polypeptide: Endonuclease V (228 aa).

Mg(2+)-binding residues include Asp43 and Asp109.

Belongs to the endonuclease V family. It depends on Mg(2+) as a cofactor.

It is found in the cytoplasm. It catalyses the reaction Endonucleolytic cleavage at apurinic or apyrimidinic sites to products with a 5'-phosphate.. Its function is as follows. DNA repair enzyme involved in the repair of deaminated bases. Selectively cleaves double-stranded DNA at the second phosphodiester bond 3' to a deoxyinosine leaving behind the intact lesion on the nicked DNA. This chain is Endonuclease V, found in Dictyoglomus turgidum (strain DSM 6724 / Z-1310).